Consider the following 242-residue polypeptide: 1-(5-phosphoribosyl)-5-[(5-phosphoribosylamino)methylideneamino] imidazole-4-carboxamide isomerase (242 aa).

Aspartate 8 functions as the Proton acceptor in the catalytic mechanism. Catalysis depends on aspartate 129, which acts as the Proton donor.

The protein belongs to the HisA/HisF family.

It localises to the cytoplasm. It catalyses the reaction 1-(5-phospho-beta-D-ribosyl)-5-[(5-phospho-beta-D-ribosylamino)methylideneamino]imidazole-4-carboxamide = 5-[(5-phospho-1-deoxy-D-ribulos-1-ylimino)methylamino]-1-(5-phospho-beta-D-ribosyl)imidazole-4-carboxamide. The protein operates within amino-acid biosynthesis; L-histidine biosynthesis; L-histidine from 5-phospho-alpha-D-ribose 1-diphosphate: step 4/9. The sequence is that of 1-(5-phosphoribosyl)-5-[(5-phosphoribosylamino)methylideneamino] imidazole-4-carboxamide isomerase from Syntrophus aciditrophicus (strain SB).